Here is a 127-residue protein sequence, read N- to C-terminus: Large ribosomal subunit protein bL20 (127 aa).

The protein belongs to the bacterial ribosomal protein bL20 family.

Functionally, binds directly to 23S ribosomal RNA and is necessary for the in vitro assembly process of the 50S ribosomal subunit. It is not involved in the protein synthesizing functions of that subunit. The protein is Large ribosomal subunit protein bL20 of Akkermansia muciniphila (strain ATCC BAA-835 / DSM 22959 / JCM 33894 / BCRC 81048 / CCUG 64013 / CIP 107961 / Muc).